A 467-amino-acid chain; its full sequence is Glutamate--tRNA ligase (467 aa).

A 'HIGH' region motif is present at residues P12–G22. Residues E114–W128 show a composition bias toward basic and acidic residues. Residues E114–P140 form a disordered region. Positions K244 to R248 match the 'KMSKS' region motif. Residue K247 coordinates ATP.

This sequence belongs to the class-I aminoacyl-tRNA synthetase family. Glutamate--tRNA ligase type 1 subfamily. Monomer.

The protein localises to the cytoplasm. The catalysed reaction is tRNA(Glu) + L-glutamate + ATP = L-glutamyl-tRNA(Glu) + AMP + diphosphate. Functionally, catalyzes the attachment of glutamate to tRNA(Glu) in a two-step reaction: glutamate is first activated by ATP to form Glu-AMP and then transferred to the acceptor end of tRNA(Glu). In Azoarcus sp. (strain BH72), this protein is Glutamate--tRNA ligase.